The sequence spans 441 residues: Proline--tRNA ligase (441 aa).

It belongs to the class-II aminoacyl-tRNA synthetase family. ProS type 2 subfamily. As to quaternary structure, homodimer.

Its subcellular location is the cytoplasm. The enzyme catalyses tRNA(Pro) + L-proline + ATP = L-prolyl-tRNA(Pro) + AMP + diphosphate. In terms of biological role, catalyzes the attachment of proline to tRNA(Pro) in a two-step reaction: proline is first activated by ATP to form Pro-AMP and then transferred to the acceptor end of tRNA(Pro). The protein is Proline--tRNA ligase of Afipia carboxidovorans (strain ATCC 49405 / DSM 1227 / KCTC 32145 / OM5) (Oligotropha carboxidovorans).